A 209-amino-acid chain; its full sequence is Segregation and condensation protein B (209 aa).

Belongs to the ScpB family. Homodimer. Homodimerization may be required to stabilize the binding of ScpA to the Smc head domains. Component of a cohesin-like complex composed of ScpA, ScpB and the Smc homodimer, in which ScpA and ScpB bind to the head domain of Smc. The presence of the three proteins is required for the association of the complex with DNA.

It is found in the cytoplasm. Functionally, participates in chromosomal partition during cell division. May act via the formation of a condensin-like complex containing Smc and ScpA that pull DNA away from mid-cell into both cell halves. This chain is Segregation and condensation protein B, found in Geobacillus thermodenitrificans (strain NG80-2).